Reading from the N-terminus, the 431-residue chain is 3-phosphoshikimate 1-carboxyvinyltransferase (431 aa).

Positions 20, 21, and 25 each coordinate 3-phosphoshikimate. Position 20 (lysine 20) interacts with phosphoenolpyruvate. 2 residues coordinate phosphoenolpyruvate: glycine 91 and arginine 119. The 3-phosphoshikimate site is built by serine 164, glutamine 166, aspartate 317, and lysine 344. Glutamine 166 is a phosphoenolpyruvate binding site. Catalysis depends on aspartate 317, which acts as the Proton acceptor. Phosphoenolpyruvate is bound by residues arginine 348 and arginine 390.

It belongs to the EPSP synthase family. In terms of assembly, monomer.

The protein localises to the cytoplasm. It carries out the reaction 3-phosphoshikimate + phosphoenolpyruvate = 5-O-(1-carboxyvinyl)-3-phosphoshikimate + phosphate. Its pathway is metabolic intermediate biosynthesis; chorismate biosynthesis; chorismate from D-erythrose 4-phosphate and phosphoenolpyruvate: step 6/7. Functionally, catalyzes the transfer of the enolpyruvyl moiety of phosphoenolpyruvate (PEP) to the 5-hydroxyl of shikimate-3-phosphate (S3P) to produce enolpyruvyl shikimate-3-phosphate and inorganic phosphate. In Aquifex aeolicus (strain VF5), this protein is 3-phosphoshikimate 1-carboxyvinyltransferase.